The following is a 150-amino-acid chain: uncharacterized protein (150 aa).

This is an uncharacterized protein from Saccharomyces cerevisiae (strain ATCC 204508 / S288c) (Baker's yeast).